Reading from the N-terminus, the 350-residue chain is DNA polymerase IV (350 aa).

The UmuC domain maps to 4–185; that stretch reads IIHIDMDCFY…LPLGKLPGIG (182 aa). Mg(2+)-binding residues include Asp-8 and Asp-103. Residue Glu-104 is part of the active site.

The protein belongs to the DNA polymerase type-Y family. In terms of assembly, monomer. Requires Mg(2+) as cofactor.

The protein localises to the cytoplasm. It carries out the reaction DNA(n) + a 2'-deoxyribonucleoside 5'-triphosphate = DNA(n+1) + diphosphate. In terms of biological role, poorly processive, error-prone DNA polymerase involved in untargeted mutagenesis. Copies undamaged DNA at stalled replication forks, which arise in vivo from mismatched or misaligned primer ends. These misaligned primers can be extended by PolIV. Exhibits no 3'-5' exonuclease (proofreading) activity. May be involved in translesional synthesis, in conjunction with the beta clamp from PolIII. The protein is DNA polymerase IV of Aeromonas hydrophila subsp. hydrophila (strain ATCC 7966 / DSM 30187 / BCRC 13018 / CCUG 14551 / JCM 1027 / KCTC 2358 / NCIMB 9240 / NCTC 8049).